A 459-amino-acid chain; its full sequence is Argininosuccinate lyase (459 aa).

This sequence belongs to the lyase 1 family. Argininosuccinate lyase subfamily.

Its subcellular location is the cytoplasm. The enzyme catalyses 2-(N(omega)-L-arginino)succinate = fumarate + L-arginine. The protein operates within amino-acid biosynthesis; L-arginine biosynthesis; L-arginine from L-ornithine and carbamoyl phosphate: step 3/3. In Staphylococcus aureus (strain MRSA252), this protein is Argininosuccinate lyase.